A 317-amino-acid polypeptide reads, in one-letter code: COP9 signalosome complex subunit 6b (317 aa).

The 154-residue stretch at 11-164 (FKLHPLVMLN…VTIYESEFHV (154 aa)) folds into the MPN domain.

Belongs to the peptidase M67A family. CSN6 subfamily. Component of the CSN complex, probably composed of CSN1, CSN2, CSN3, CSN4, CSN5 (CSN5A or CSN5B), CSN6 (CSN6A or CSN6B), CSN7 and CSN8. Interacts with itself. In the complex, it probably interacts directly with CSN4, CSN5A or CSN5B, and CSN7. Binds to the translation initiation factors TIF3E1.

It localises to the cytoplasm. It is found in the nucleus. Functionally, component of the COP9 signalosome complex (CSN), a complex involved in various cellular and developmental processes such as photomorphogenesis and auxin and jasmonate responses. The CSN complex is an essential regulator of the ubiquitin (Ubl) conjugation pathway by mediating the deneddylation of the cullin subunits of SCF-type E3 ligase complexes, leading to decrease the Ubl ligase activity of SCF. It is involved in repression of photomorphogenesis in darkness by regulating the activity of COP1-containing Ubl ligase complexes. The complex is also required for degradation of PSIAA6 by regulating the activity of the Ubl ligase SCF-TIR complex. Essential for the structural integrity of the CSN holocomplex. The sequence is that of COP9 signalosome complex subunit 6b from Arabidopsis thaliana (Mouse-ear cress).